The primary structure comprises 415 residues: Acetylornithine aminotransferase (415 aa).

Residues 115–116 (GA) and Phe-148 each bind pyridoxal 5'-phosphate. Arg-151 provides a ligand contact to N(2)-acetyl-L-ornithine. 239-242 (DEVQ) provides a ligand contact to pyridoxal 5'-phosphate. N6-(pyridoxal phosphate)lysine is present on Lys-268. Ser-295 provides a ligand contact to N(2)-acetyl-L-ornithine. A pyridoxal 5'-phosphate-binding site is contributed by Thr-296.

The protein belongs to the class-III pyridoxal-phosphate-dependent aminotransferase family. ArgD subfamily. Homodimer. The cofactor is pyridoxal 5'-phosphate.

The protein resides in the cytoplasm. The catalysed reaction is N(2)-acetyl-L-ornithine + 2-oxoglutarate = N-acetyl-L-glutamate 5-semialdehyde + L-glutamate. It functions in the pathway amino-acid biosynthesis; L-arginine biosynthesis; N(2)-acetyl-L-ornithine from L-glutamate: step 4/4. In Prochlorococcus marinus subsp. pastoris (strain CCMP1986 / NIES-2087 / MED4), this protein is Acetylornithine aminotransferase.